Reading from the N-terminus, the 445-residue chain is Adenylosuccinate synthetase (445 aa).

GTP is bound by residues 12–18 (GDEGKGK) and 40–42 (GHT). The Proton acceptor role is filled by Asp-13. Residues Asp-13 and Gly-40 each contribute to the Mg(2+) site. Residues 13–16 (DEGK), 38–41 (NAGH), Thr-128, Arg-142, Gln-223, Thr-238, and Arg-302 each bind IMP. The active-site Proton donor is His-41. 298 to 304 (TTTGRKR) contributes to the substrate binding site. GTP-binding positions include Arg-304, 330 to 332 (KLD), and 411 to 413 (SLG).

Belongs to the adenylosuccinate synthetase family. As to quaternary structure, homodimer. Requires Mg(2+) as cofactor.

It is found in the cytoplasm. The catalysed reaction is IMP + L-aspartate + GTP = N(6)-(1,2-dicarboxyethyl)-AMP + GDP + phosphate + 2 H(+). It functions in the pathway purine metabolism; AMP biosynthesis via de novo pathway; AMP from IMP: step 1/2. Its function is as follows. Plays an important role in the de novo pathway of purine nucleotide biosynthesis. Catalyzes the first committed step in the biosynthesis of AMP from IMP. This is Adenylosuccinate synthetase from Cyanothece sp. (strain PCC 7425 / ATCC 29141).